Here is a 218-residue protein sequence, read N- to C-terminus: Acetyl- and succinyl-CoA transferase MT0822 (218 aa).

Residues 32 to 188 (DTILEGVHDP…EALLFRLTRD (157 aa)) form the N-acetyltransferase domain. Substrate contacts are provided by residues Gln-94, 109–113 (SGSWL), 119–124 (GHGYGT), 145–151 (SRSFVDN), and Arg-160.

As to quaternary structure, dimer of dimers.

It catalyses the reaction L-lysyl-[protein] + acetyl-CoA = N(6)-acetyl-L-lysyl-[protein] + CoA + H(+). The enzyme catalyses succinyl-CoA + L-lysyl-[protein] = N(6)-succinyl-L-lysyl-[protein] + CoA + H(+). Acetylates and succinylates nucleoid-associated, DNA-binding protein HupB. This Mycobacterium tuberculosis (strain CDC 1551 / Oshkosh) protein is Acetyl- and succinyl-CoA transferase MT0822.